The following is a 173-amino-acid chain: uncharacterized protein (173 aa).

This is an uncharacterized protein from Bacillus subtilis (strain 168).